Consider the following 89-residue polypeptide: Protein S100-A8 (89 aa).

Ala2 is modified (N-acetylalanine). 2 EF-hand domains span residues 13–48 (IEVY…FVQN) and 46–81 (VQNK…VGVA). Positions 17 and 27 each coordinate Zn(2+). Asp33 contributes to the Ca(2+) binding site. Cys42 is subject to S-nitrosocysteine. Ca(2+) contacts are provided by Asp59, Asn61, Asp63, and Glu70. Residue His83 participates in Zn(2+) binding.

It belongs to the S-100 family. In terms of assembly, homodimer. Preferentially exists as a heterodimer or heterotetramer with S100A9 known as calprotectin (S100A8/A9). S100A8 interacts with AGER, ATP2A2 and with the heterodimeric complex formed by TLR4 and LY96. Calprotectin (S100A8/9) interacts with CEACAM3 and tubulin filaments in a calcium-dependent manner. Heterotetrameric calprotectin (S100A8/A9) interacts with ANXA6 and associates with tubulin filaments in activated monocytes. S100A8 and calprotectin (S100A8/9) interact with NCF2/P67PHOX, RAC1 and RAC2. Calprotectin (S100A8/9) interacts with CYBA and CYBB. Calprotectin (S100A8/9) interacts with NOS2 to form the iNOS-S100A8/A9 transnitrosylase complex. Calprotectin (S100A8/9) interacts with CD69.

The protein resides in the secreted. It is found in the cytoplasm. It localises to the cytoskeleton. The protein localises to the cell membrane. In terms of biological role, S100A8 is a calcium- and zinc-binding protein which plays a prominent role in the regulation of inflammatory processes and immune response. It can induce neutrophil chemotaxis and adhesion. Predominantly found as calprotectin (S100A8/A9) which has a wide plethora of intra- and extracellular functions. The intracellular functions include: facilitating leukocyte arachidonic acid trafficking and metabolism, modulation of the tubulin-dependent cytoskeleton during migration of phagocytes and activation of the neutrophilic NADPH-oxidase. Also participates in regulatory T-cell differentiation together with CD69. Activates NADPH-oxidase by facilitating the enzyme complex assembly at the cell membrane, transferring arachidonic acid, an essential cofactor, to the enzyme complex and S100A8 contributes to the enzyme assembly by directly binding to NCF2/P67PHOX. The extracellular functions involve pro-inflammatory, antimicrobial, oxidant-scavenging and apoptosis-inducing activities. Its pro-inflammatory activity includes recruitment of leukocytes, promotion of cytokine and chemokine production, and regulation of leukocyte adhesion and migration. Acts as an alarmin or a danger associated molecular pattern (DAMP) molecule and stimulates innate immune cells via binding to pattern recognition receptors such as Toll-like receptor 4 (TLR4) and receptor for advanced glycation endproducts (AGER). Binding to TLR4 and AGER activates the MAP-kinase and NF-kappa-B signaling pathways resulting in the amplification of the pro-inflammatory cascade. Has antimicrobial activity towards bacteria and fungi and exerts its antimicrobial activity probably via chelation of Zn(2+) which is essential for microbial growth. Can induce cell death via autophagy and apoptosis and this occurs through the cross-talk of mitochondria and lysosomes via reactive oxygen species (ROS) and the process involves BNIP3. Can regulate neutrophil number and apoptosis by an anti-apoptotic effect; regulates cell survival via ITGAM/ITGB and TLR4 and a signaling mechanism involving MEK-ERK. Its role as an oxidant scavenger has a protective role in preventing exaggerated tissue damage by scavenging oxidants. The iNOS-S100A8/A9 transnitrosylase complex is proposed to direct selective inflammatory stimulus-dependent S-nitrosylation of multiple targets such as GAPDH, ANXA5, EZR, MSN and VIM by recognizing a [IL]-x-C-x-x-[DE] motif; S100A8 seems to contribute to S-nitrosylation site selectivity. This Rattus norvegicus (Rat) protein is Protein S100-A8 (S100a8).